The chain runs to 709 residues: Acyl-coenzyme A oxidase 4 (709 aa).

Residues 1-12 are compositionally biased toward polar residues; sequence MTFTKKNVSVSQ. Residues 1 to 29 are disordered; it reads MTFTKKNVSVSQGPDPRSSIQKERDSSKW.

The protein belongs to the acyl-CoA oxidase family. Homooctamer. FAD serves as cofactor.

It localises to the peroxisome. The catalysed reaction is a 2,3-saturated acyl-CoA + O2 = a (2E)-enoyl-CoA + H2O2. The protein operates within lipid metabolism; peroxisomal fatty acid beta-oxidation. The chain is Acyl-coenzyme A oxidase 4 (POX4) from Candida tropicalis (Yeast).